Reading from the N-terminus, the 368-residue chain is MNERIFRENTRPVQVGNLTIGGSEELTIQSMTTTKTHDVEATVAEIHRLEEVGCQIVRVACPDERAANALSAIKKRIHIPLVADIHFDYRLALKAIDAGVDKIRINPGNIGRRDRVEKVVNAAKAKNIPIRIGVNAGSLEKKIIQKYGYPTAEGMVESALAHIKILEDLDFYDIIVSLKASDVNLAIEAYDKASRAFNYPLHLGITESGTQFAGGIKSAAGLGAILSLGIGNTLRVSLSADPVEEIKVAREVLKSFGLSSNAAMLISCPTCGRIEIDLIRIANEVENYIATIKAPIKVAVLGCAVNGPGEAREADIGIAGSNGEGLLFRHGKIIRKVPEAIMVEELKKEIDILAEEYFEKKTDLESLR.

[4Fe-4S] cluster-binding residues include Cys-268, Cys-271, Cys-303, and Glu-310.

It belongs to the IspG family. Requires [4Fe-4S] cluster as cofactor.

It carries out the reaction (2E)-4-hydroxy-3-methylbut-2-enyl diphosphate + oxidized [flavodoxin] + H2O + 2 H(+) = 2-C-methyl-D-erythritol 2,4-cyclic diphosphate + reduced [flavodoxin]. It participates in isoprenoid biosynthesis; isopentenyl diphosphate biosynthesis via DXP pathway; isopentenyl diphosphate from 1-deoxy-D-xylulose 5-phosphate: step 5/6. Functionally, converts 2C-methyl-D-erythritol 2,4-cyclodiphosphate (ME-2,4cPP) into 1-hydroxy-2-methyl-2-(E)-butenyl 4-diphosphate. The chain is 4-hydroxy-3-methylbut-2-en-1-yl diphosphate synthase (flavodoxin) from Listeria monocytogenes serotype 4b (strain F2365).